We begin with the raw amino-acid sequence, 149 residues long: UPF0260 protein Pfl01_1392 (149 aa).

The protein belongs to the UPF0260 family.

In Pseudomonas fluorescens (strain Pf0-1), this protein is UPF0260 protein Pfl01_1392.